A 328-amino-acid chain; its full sequence is DNA-directed RNA polymerase subunit alpha (328 aa).

The interval 1–232 (MSTQGFLKPR…DQISVFAALE (232 aa)) is alpha N-terminal domain (alpha-NTD). An alpha C-terminal domain (alpha-CTD) region spans residues 248–328 (IDPVLLRPVD…NWPPLGLERP (81 aa)).

This sequence belongs to the RNA polymerase alpha chain family. In terms of assembly, homodimer. The RNAP catalytic core consists of 2 alpha, 1 beta, 1 beta' and 1 omega subunit. When a sigma factor is associated with the core the holoenzyme is formed, which can initiate transcription.

The catalysed reaction is RNA(n) + a ribonucleoside 5'-triphosphate = RNA(n+1) + diphosphate. Its function is as follows. DNA-dependent RNA polymerase catalyzes the transcription of DNA into RNA using the four ribonucleoside triphosphates as substrates. This Bordetella avium (strain 197N) protein is DNA-directed RNA polymerase subunit alpha.